The following is a 44-amino-acid chain: Putative protein PsbN (44 aa).

A helical transmembrane segment spans residues 3–23; that stretch reads IISFLSTIFLGFFIISTTIYS.

The protein belongs to the PsbN family.

The protein localises to the plastid. It is found in the chloroplast thylakoid membrane. Its function is as follows. May play a role in photosystem I and II biogenesis. This is Putative protein PsbN from Euglena gracilis.